Consider the following 160-residue polypeptide: Archaemetzincin (160 aa).

Residue His117 participates in Zn(2+) binding. Glu118 (proton acceptor) is an active-site residue. The Zn(2+) site is built by His121, His127, Cys128, Cys132, Cys151, and Cys154.

The protein belongs to the peptidase M54 family. Monomer. Zn(2+) serves as cofactor.

Functionally, probable zinc metalloprotease whose natural substrate is unknown. The polypeptide is Archaemetzincin (Archaeoglobus fulgidus (strain ATCC 49558 / DSM 4304 / JCM 9628 / NBRC 100126 / VC-16)).